Consider the following 245-residue polypeptide: Probable inactive carboxylesterase Os04g0669700 (245 aa).

Residues Ser-115 and His-201 each act as charge relay system in the active site.

The protein belongs to the AB hydrolase superfamily. AB hydrolase 2 family.

In Oryza sativa subsp. japonica (Rice), this protein is Probable inactive carboxylesterase Os04g0669700.